Here is an 883-residue protein sequence, read N- to C-terminus: Probable ribonuclease ZC3H12C (883 aa).

Disordered regions lie at residues 53–109 (QLSP…ISVE) and 139–158 (DFKPEESQTTSKEAKKPPDV). A Phosphoserine modification is found at Ser-230. The 156-residue stretch at 245-400 (LRPIVIDGSN…LGRHGPSLDN (156 aa)) folds into the RNase NYN domain. The segment at 410–435 (EHKKQPCPYGKKCTYGHKCKYYHPER) adopts a C3H1-type zinc-finger fold. Disordered stretches follow at residues 456–551 (AKTA…FPPQ), 680–738 (FHDP…KAPH), and 754–775 (SRLYDSSPSRQRKPYSRQEGLG). Residues 466–477 (KSNSVPCSTKAD) show a composition bias toward polar residues. Basic and acidic residues predominate over residues 503–515 (LEEKLPTKNKLET). The segment covering 517–542 (SVPSLVSIPATSTAKPQSTTSLSNGL) has biased composition (polar residues). Residues 705–714 (HLALHLPHSA) show a composition bias toward low complexity.

This sequence belongs to the ZC3H12 family. Mg(2+) is required as a cofactor.

May function as RNase and regulate the levels of target RNA species. The polypeptide is Probable ribonuclease ZC3H12C (ZC3H12C) (Homo sapiens (Human)).